A 474-amino-acid chain; its full sequence is Dihydrolipoyl dehydrogenase (474 aa).

Residues 36 to 44 (EAKDMGGTC), lysine 53, and glycine 119 contribute to the FAD site. Cysteines 44 and 49 form a disulfide. NAD(+) contacts are provided by residues 184–188 (GSGYI), glutamate 207, and 275–278 (ATGR). Residues aspartate 323 and alanine 331 each contribute to the FAD site. Histidine 459 (proton acceptor) is an active-site residue.

It belongs to the class-I pyridine nucleotide-disulfide oxidoreductase family. In terms of assembly, homodimer. It depends on FAD as a cofactor.

The protein localises to the cell inner membrane. The enzyme catalyses N(6)-[(R)-dihydrolipoyl]-L-lysyl-[protein] + NAD(+) = N(6)-[(R)-lipoyl]-L-lysyl-[protein] + NADH + H(+). Functionally, lipoamide dehydrogenase is a component of the alpha-ketoacid dehydrogenase complexes. The protein is Dihydrolipoyl dehydrogenase (lpdA) of Synechocystis sp. (strain ATCC 27184 / PCC 6803 / Kazusa).